The chain runs to 304 residues: E3 ubiquitin-protein ligase CHIP (304 aa).

Basic and acidic residues predominate over residues 1–10 (MKGKEEKEGG). The tract at residues 1–30 (MKGKEEKEGGARLGTGGGGSPDKSPSAQEL) is disordered. Residue Lys2 forms a Glycyl lysine isopeptide (Lys-Gly) (interchain with G-Cter in ubiquitin) linkage. The span at 11-20 (ARLGTGGGGS) shows a compositional bias: gly residues. The residue at position 20 (Ser20) is a Phosphoserine. Lys23 participates in a covalent cross-link: Glycyl lysine isopeptide (Lys-Gly) (interchain with G-Cter in ubiquitin). Phosphoserine is present on residues Ser24 and Ser26. 3 TPR repeats span residues 27–60 (AQEL…NPLV), 61–94 (AVYY…DGQS), and 96–128 (KAHF…AKEQ). Residues 102-201 (GQCQLEMESY…GHIRAQQACI (100 aa)) form a required for interaction with MAPK7 region. A required for interaction with and ubiquitination of MYOCD region spans residues 143 to 197 (AKKKRWNSIEERRIHQESELHSYLTRLIAAERERELEECQRNHEGDEDDGHIRAQ). The interval 144–198 (KKKRWNSIEERRIHQESELHSYLTRLIAAERERELEECQRNHEGDEDDGHIRAQQ) is required for interaction with FOXO1. The required for ubiquitination of FOXO1 stretch occupies residues 144 to 304 (KKKRWNSIEE…ISENGWVEDY (161 aa)). Position 150 is a phosphoserine (Ser150). Glycyl lysine isopeptide (Lys-Gly) (interchain with G-Cter in ubiquitin) cross-links involve residues Lys222 and Lys256. The region spanning 227 to 301 (DIPDYLCGKI…DAFISENGWV (75 aa)) is the U-box domain. A Phosphoserine modification is found at Ser274.

Homodimer. Interacts with BAG2, and with the E2 ubiquitin conjugating enzymes UBE2D1, UBE2D2 and UBE2D3. Detected in a ternary complex containing STUB1, HSPA1A and HSPBP1. Part of a complex composed of STUB1/CHIP, VCP/p97, CHRNA3, and UBXN2A that modulates the ubiquitination and endoplasmic reticulum-associated degradation (ERAD) of CHRNA3. Within the complex UBXN2A acts as a scaffold protein required for the interaction of CHRNA3 with VCP/p97, this interaction also inhibits CHRNA3 ubiquitination by STUB1/CHIP and subsequently ERAD. Interacts with MKKS. Interacts with DNAAF4. Interacts (via the U-box domain) with the UBE2V2-UBE2N heterodimer; the complex has a specific 'Lys-63'-linked polyubiquitination activity. Interacts (when monoubiquitinated) with ATXN3. Interacts with UBE2W. Interacts with DNAJB6. Interacts with FLCN and HSP90AA1. Interacts with HSP90. Interacts with UBE2N and UBE2V1. Interacts (via TPR repeats) with HSPA8 (via C-terminus). Interacts (via TPR repeats) with HSPA1A (via C-terminus). Interacts with the non-acetylated form of HSPA1A and HSPA1B. Interacts with SMAD3 and HSP90AB1. Interacts with UBE4B. Interacts with PRMT5. Interacts with MYOCD (via C-terminus). Interacts with FOXO1 (when phosphorylated on 'Ser-250'). Interacts with MAPK7/ERK5; the interaction is enhanced in the presence of IGF1 or MAP2K5 and promotes STUB1/CHIP E3 ligase activity. Interacts with and ubiquitinates ESR1; the interaction is promoted in the absence of estradiol (17-beta-estradiol/E2). Interacts with ESR2. Interacts with and ubiquitinates NFATC3; HSPA1A/HSP70 is required as a co-chaperone. In macrophages, interacts with PAQR3; the interaction promotes PPARG poylubiquitination and STUB1-mediated degradation. Component of the chaperone-assisted selective autophagy (CASA) complex consisting of BAG3, HSPA8/HSC70, HSPB8 and STUB1/CHIP. Auto-ubiquitinated; mediated by UBE2D1 and UBE2D2 and enhanced in the presence of MAP2K5. Monoubiquitinated at Lys-2 following cell stress by UBE2W, promoting the interaction with ATXN3. Expressed in the adventitia layer of the carotid artery (at protein level). Expressed in the CA1 region of the hippocampus (at protein level). Expressed in the uterus (at protein level).

Its subcellular location is the cytoplasm. It localises to the nucleus. The protein localises to the mitochondrion. It catalyses the reaction S-ubiquitinyl-[E2 ubiquitin-conjugating enzyme]-L-cysteine + [acceptor protein]-L-lysine = [E2 ubiquitin-conjugating enzyme]-L-cysteine + N(6)-ubiquitinyl-[acceptor protein]-L-lysine.. The protein operates within protein modification; protein ubiquitination. Functionally, E3 ubiquitin-protein ligase which targets misfolded chaperone substrates towards proteasomal degradation. Plays a role in the maintenance of mitochondrial morphology and promotes mitophagic removal of dysfunctional mitochondria; thereby acts as a protector against apoptosis in response to cellular stress. Negatively regulates vascular smooth muscle contraction, via degradation of the transcriptional activator MYOCD and subsequent loss of transcription of genes involved in vascular smooth muscle contraction. Promotes survival and proliferation of cardiac smooth muscle cells via ubiquitination and degradation of FOXO1, resulting in subsequent repression of FOXO1-mediated transcription of pro-apoptotic genes. Ubiquitinates ICER-type isoforms of CREM and targets them for proteasomal degradation, thereby acts as a positive effector of MAPK/ERK-mediated inhibition of apoptosis in cardiomyocytes. Inhibits lipopolysaccharide-induced apoptosis and hypertrophy in cardiomyocytes, via ubiquitination and subsequent proteasomal degradation of NFATC3. Collaborates with ATXN3 in the degradation of misfolded chaperone substrates: ATXN3 restricting the length of ubiquitin chain attached to STUB1/CHIP substrates and preventing further chain extension. Ubiquitinates NOS1 in concert with Hsp70 and Hsp40. Modulates the activity of several chaperone complexes, including Hsp70, Hsc70 and Hsp90. Ubiquitinates CHRNA3 targeting it for endoplasmic reticulum-associated degradation in cortical neurons, as part of the STUB1-VCP-UBXN2A complex. Ubiquitinates and promotes ESR1 proteasomal degradation in response to age-related circulating estradiol (17-beta-estradiol/E2) decline, thereby promotes neuronal apoptosis in response to ischemic reperfusion injury. Mediates transfer of non-canonical short ubiquitin chains to HSPA8 that have no effect on HSPA8 degradation. Mediates polyubiquitination of DNA polymerase beta (POLB) at 'Lys-41', 'Lys-61' and 'Lys-81', thereby playing a role in base-excision repair: catalyzes polyubiquitination by amplifying the HUWE1/ARF-BP1-dependent monoubiquitination and leading to POLB-degradation by the proteasome. Mediates polyubiquitination of CYP3A4. Ubiquitinates EPHA2 and may regulate the receptor stability and activity through proteasomal degradation. Acts as a co-chaperone for HSPA1A and HSPA1B chaperone proteins and promotes ubiquitin-mediated protein degradation. Negatively regulates the suppressive function of regulatory T-cells (Treg) during inflammation by mediating the ubiquitination and degradation of FOXP3 in a HSPA1A/B-dependent manner. Catalyzes monoubiquitination of SIRT6, preventing its degradation by the proteasome. Likely mediates polyubiquitination and down-regulates plasma membrane expression of PD-L1/CD274, an immune inhibitory ligand critical for immune tolerance to self and antitumor immunity. Negatively regulates TGF-beta signaling by modulating the basal level of SMAD3 via ubiquitin-mediated degradation. Plays a role in the degradation of TP53. Mediates ubiquitination of RIPK3 leading to its subsequent proteasome-dependent degradation. May regulate myosin assembly in striated muscles together with UBE4B and VCP/p97 by targeting myosin chaperone UNC45B for proteasomal degradation. Ubiquitinates PPARG in macrophages playing a role in M2 macrophages polarization and angiogenesis. In Rattus norvegicus (Rat), this protein is E3 ubiquitin-protein ligase CHIP.